The following is a 151-amino-acid chain: Myosin light polypeptide 6 (151 aa).

Position 2 is an N-acetylcysteine (Cys2). The 36-residue stretch at 7 to 42 (DQTAEFKEAFQLFDRTGDGKILYSQCGDVMRALGQN) folds into the EF-hand 1 domain. Ser57 carries the phosphoserine modification. Lys81 bears the N6-acetyllysine mark. EF-hand domains lie at 84 to 119 (GTYE…LGEK) and 119 to 151 (KMTE…VLNG).

In terms of assembly, myosin is a hexamer of 2 heavy chains and 4 light chains. Interacts with SPATA6.

Its function is as follows. Regulatory light chain of myosin. Does not bind calcium. This Rattus norvegicus (Rat) protein is Myosin light polypeptide 6 (Myl6).